Reading from the N-terminus, the 357-residue chain is Glucose-6-phosphatase catalytic subunit 1 (357 aa).

The Lumenal portion of the chain corresponds to 1 to 28 (MEKGMNVLHDFGIQSTHYLQVNYQNSQD). Residues 29-49 (WFILVSVIADLRNAFYVLFPI) traverse the membrane as a helical segment. Residues 50 to 60 (WFHLREAVGIK) are Cytoplasmic-facing. Residues 61–81 (LLWVAVIGDWLNLVFKWILFG) traverse the membrane as a helical segment. Residues 82–117 (QRPYWWVLDTDYYSNTSAPLIKQFPVTCETGPGSPS) are Lumenal-facing. Substrate is bound at residue Arg-83. N-linked (GlcNAc...) asparagine glycosylation occurs at Asn-96. Residues 118–138 (GHAMGTAGVYYVMVTSTLSIF) traverse the membrane as a helical segment. His-119 functions as the Proton donor in the catalytic mechanism. Residues 139 to 147 (RGKKKPTYR) are Cytoplasmic-facing. The helical transmembrane segment at 148–168 (FRCLNVMLWLGFWVVQLNVCL) threads the bilayer. The Lumenal portion of the chain corresponds to 169–170 (SR). Arg-170 serves as a coordination point for substrate. The chain crosses the membrane as a helical span at residues 171 to 191 (IYLAAHFPHQVVAGVLSGIAV). His-176 serves as the catalytic Nucleophile. At 192–209 (AETFRHIQSIYNASLKKY) the chain is on the cytoplasmic side. The helical transmembrane segment at 210–230 (FLITCFLFSFAIGFYLLLKWL) threads the bilayer. Topologically, residues 231–254 (GVDLLWTLEKAKRRCERPEWVHID) are lumenal. Residues 255–275 (TTPFASLLKNLGTLFGLGLAL) form a helical membrane-spanning segment. Over 276–291 (NSSMYRESCKGKLSKW) the chain is Cytoplasmic. A helical transmembrane segment spans residues 292 to 312 (FPFRLSCIVASLVLLHLFDSL). Topologically, residues 313–320 (KPPSQIEL) are lumenal. A helical membrane pass occupies residues 321-341 (IFYVLSFCKSAAVPLASVSLI). Residues 342 to 357 (PYCLAWVLGQPNKKTV) lie on the Cytoplasmic side of the membrane. A Prevents secretion from ER motif is present at residues 354–357 (KKTV).

The protein belongs to the glucose-6-phosphatase family.

The protein localises to the endoplasmic reticulum membrane. It carries out the reaction D-glucose 6-phosphate + H2O = D-glucose + phosphate. It participates in carbohydrate biosynthesis; gluconeogenesis. Hydrolyzes glucose-6-phosphate to glucose in the endoplasmic reticulum. Forms with the glucose-6-phosphate transporter (SLC37A4/G6PT) the complex responsible for glucose production in the terminal step of glycogenolysis and gluconeogenesis. Hence, it is the key enzyme in homeostatic regulation of blood glucose levels. The chain is Glucose-6-phosphatase catalytic subunit 1 (G6PC1) from Bos taurus (Bovine).